We begin with the raw amino-acid sequence, 373 residues long: Chorismate synthase (373 aa).

Arginine 46 contributes to the NADP(+) binding site. FMN is bound by residues 123–125 (RSS), 251–252 (NA), glycine 295, 310–314 (KPTPS), and arginine 337.

Belongs to the chorismate synthase family. FMNH2 is required as a cofactor.

It carries out the reaction 5-O-(1-carboxyvinyl)-3-phosphoshikimate = chorismate + phosphate. Its pathway is metabolic intermediate biosynthesis; chorismate biosynthesis; chorismate from D-erythrose 4-phosphate and phosphoenolpyruvate: step 7/7. In terms of biological role, catalyzes the anti-1,4-elimination of the C-3 phosphate and the C-6 proR hydrogen from 5-enolpyruvylshikimate-3-phosphate (EPSP) to yield chorismate, which is the branch point compound that serves as the starting substrate for the three terminal pathways of aromatic amino acid biosynthesis. This reaction introduces a second double bond into the aromatic ring system. This chain is Chorismate synthase, found in Methanococcus maripaludis (strain DSM 14266 / JCM 13030 / NBRC 101832 / S2 / LL).